The sequence spans 337 residues: Protein-methionine-sulfoxide reductase catalytic subunit MsrP (337 aa).

The tat-type signal signal peptide spans 1-54 (MLIKLPRSSECKASEITPEGIYLSRRTLLGGSLAGLALGALPGGVGAAQMSRYA). Mo-molybdopterin-binding positions include Asn-94, 97 to 98 (YE), Cys-152, Thr-187, Asn-237, Arg-242, and 253 to 255 (SIK).

This sequence belongs to the MsrP family. Heterodimer of a catalytic subunit (MsrP) and a heme-binding subunit (MsrQ). It depends on Mo-molybdopterin as a cofactor. Post-translationally, predicted to be exported by the Tat system. The position of the signal peptide cleavage has not been experimentally proven.

It localises to the periplasm. It catalyses the reaction L-methionyl-[protein] + a quinone + H2O = L-methionyl-(S)-S-oxide-[protein] + a quinol. It carries out the reaction L-methionyl-[protein] + a quinone + H2O = L-methionyl-(R)-S-oxide-[protein] + a quinol. Functionally, part of the MsrPQ system that repairs oxidized periplasmic proteins containing methionine sulfoxide residues (Met-O), using respiratory chain electrons. Thus protects these proteins from oxidative-stress damage caused by reactive species of oxygen and chlorine generated by the host defense mechanisms. MsrPQ is essential for the maintenance of envelope integrity under bleach stress, rescuing a wide series of structurally unrelated periplasmic proteins from methionine oxidation. The catalytic subunit MsrP is non-stereospecific, being able to reduce both (R-) and (S-) diastereoisomers of methionine sulfoxide. The polypeptide is Protein-methionine-sulfoxide reductase catalytic subunit MsrP (Pseudomonas putida (strain ATCC 47054 / DSM 6125 / CFBP 8728 / NCIMB 11950 / KT2440)).